Consider the following 329-residue polypeptide: Peroxidase 18 (329 aa).

The signal sequence occupies residues 1 to 29 (MALQFFSCKPKYTFLSSLLLLLLLSSSVA). Disulfide bonds link cysteine 40/cysteine 116, cysteine 73/cysteine 78, cysteine 122/cysteine 325, and cysteine 201/cysteine 235. Residue histidine 71 is the Proton acceptor of the active site. 5 residues coordinate Ca(2+): aspartate 72, valine 75, glycine 77, aspartate 79, and serine 81. A glycan (N-linked (GlcNAc...) asparagine) is linked at asparagine 87. Isoleucine 164 contributes to the substrate binding site. Histidine 194 lines the heme b pocket. Threonine 195 serves as a coordination point for Ca(2+). 3 residues coordinate Ca(2+): aspartate 249, threonine 252, and aspartate 257.

The protein belongs to the peroxidase family. Classical plant (class III) peroxidase subfamily. Heme b serves as cofactor. Requires Ca(2+) as cofactor.

It is found in the secreted. The enzyme catalyses 2 a phenolic donor + H2O2 = 2 a phenolic radical donor + 2 H2O. Functionally, removal of H(2)O(2), oxidation of toxic reductants, biosynthesis and degradation of lignin, suberization, auxin catabolism, response to environmental stresses such as wounding, pathogen attack and oxidative stress. These functions might be dependent on each isozyme/isoform in each plant tissue. The sequence is that of Peroxidase 18 (PER18) from Arabidopsis thaliana (Mouse-ear cress).